The primary structure comprises 164 residues: ATP synthase subunit b (164 aa).

The chain crosses the membrane as a helical span at residues 6-26 (GELVGNFILVTGSVIVLLLLI).

The protein belongs to the ATPase B chain family. As to quaternary structure, F-type ATPases have 2 components, F(1) - the catalytic core - and F(0) - the membrane proton channel. F(1) has five subunits: alpha(3), beta(3), gamma(1), delta(1), epsilon(1). F(0) has three main subunits: a(1), b(2) and c(10-14). The alpha and beta chains form an alternating ring which encloses part of the gamma chain. F(1) is attached to F(0) by a central stalk formed by the gamma and epsilon chains, while a peripheral stalk is formed by the delta and b chains.

It localises to the cell membrane. F(1)F(0) ATP synthase produces ATP from ADP in the presence of a proton or sodium gradient. F-type ATPases consist of two structural domains, F(1) containing the extramembraneous catalytic core and F(0) containing the membrane proton channel, linked together by a central stalk and a peripheral stalk. During catalysis, ATP synthesis in the catalytic domain of F(1) is coupled via a rotary mechanism of the central stalk subunits to proton translocation. Its function is as follows. Component of the F(0) channel, it forms part of the peripheral stalk, linking F(1) to F(0). This Streptococcus pyogenes serotype M3 (strain ATCC BAA-595 / MGAS315) protein is ATP synthase subunit b.